The chain runs to 202 residues: Orotate phosphoribosyltransferase (202 aa).

113 to 121 (EDIITTGGS) provides a ligand contact to 5-phospho-alpha-D-ribose 1-diphosphate. Positions 117 and 145 each coordinate orotate.

The protein belongs to the purine/pyrimidine phosphoribosyltransferase family. PyrE subfamily. In terms of assembly, homodimer. Mg(2+) is required as a cofactor.

It carries out the reaction orotidine 5'-phosphate + diphosphate = orotate + 5-phospho-alpha-D-ribose 1-diphosphate. The protein operates within pyrimidine metabolism; UMP biosynthesis via de novo pathway; UMP from orotate: step 1/2. In terms of biological role, catalyzes the transfer of a ribosyl phosphate group from 5-phosphoribose 1-diphosphate to orotate, leading to the formation of orotidine monophosphate (OMP). In Sulfurimonas denitrificans (strain ATCC 33889 / DSM 1251) (Thiomicrospira denitrificans (strain ATCC 33889 / DSM 1251)), this protein is Orotate phosphoribosyltransferase.